The following is a 151-amino-acid chain: Proteolipid protein 2 (151 aa).

The region spanning Phe19–Gln137 is the MARVEL domain. The next 4 helical transmembrane spans lie at Gly25–Ser45, Ala48–Met68, Phe85–Glu105, and Ile112–Thr132.

It localises to the membrane. May play a role in cell differentiation in the intestinal epithelium. The polypeptide is Proteolipid protein 2 (Plp2) (Rattus norvegicus (Rat)).